We begin with the raw amino-acid sequence, 119 residues long: Ribonuclease P protein component (119 aa).

The protein belongs to the RnpA family. Consists of a catalytic RNA component (M1 or rnpB) and a protein subunit.

It catalyses the reaction Endonucleolytic cleavage of RNA, removing 5'-extranucleotides from tRNA precursor.. In terms of biological role, RNaseP catalyzes the removal of the 5'-leader sequence from pre-tRNA to produce the mature 5'-terminus. It can also cleave other RNA substrates such as 4.5S RNA. The protein component plays an auxiliary but essential role in vivo by binding to the 5'-leader sequence and broadening the substrate specificity of the ribozyme. This Pasteurella multocida (strain Pm70) protein is Ribonuclease P protein component.